We begin with the raw amino-acid sequence, 163 residues long: Large ribosomal subunit protein uL10 (163 aa).

The protein belongs to the universal ribosomal protein uL10 family. In terms of assembly, part of the ribosomal stalk of the 50S ribosomal subunit. The N-terminus interacts with L11 and the large rRNA to form the base of the stalk. The C-terminus forms an elongated spine to which L12 dimers bind in a sequential fashion forming a multimeric L10(L12)X complex.

Its function is as follows. Forms part of the ribosomal stalk, playing a central role in the interaction of the ribosome with GTP-bound translation factors. The chain is Large ribosomal subunit protein uL10 (rplJ) from Pasteurella multocida (strain Pm70).